The sequence spans 878 residues: Aminopeptidase M1-C (878 aa).

The segment at 102-209 (LGEGVLAMDF…MSTYLVAIVV (108 aa)) is required for membrane association. Substrate contacts are provided by residues Glu-142 and 275 to 279 (GAMEN). His-311 lines the Zn(2+) pocket. The active-site Proton acceptor is Glu-312. 2 residues coordinate Zn(2+): His-315 and Glu-334. The short motif at 726-727 (LL) is the Dileucine internalization motif element.

The protein belongs to the peptidase M1 family. Homodimer. Requires Zn(2+) as cofactor.

It localises to the membrane. It is found in the microsome membrane. The protein resides in the cytoplasm. It catalyses the reaction Release of an N-terminal amino acid, Xaa-|-Yaa- from a peptide, amide or arylamide. Xaa is preferably Ala, but may be most amino acids including Pro (slow action). When a terminal hydrophobic residue is followed by a prolyl residue, the two may be released as an intact Xaa-Pro dipeptide.. The polypeptide is Aminopeptidase M1-C (Oryza sativa subsp. japonica (Rice)).